The chain runs to 442 residues: tRNA-2-methylthio-N(6)-dimethylallyladenosine synthase (442 aa).

An MTTase N-terminal domain is found at 2–120 (KKVFIRTFGC…LPKMIVDKET (119 aa)). 6 residues coordinate [4Fe-4S] cluster: Cys11, Cys49, Cys83, Cys157, Cys161, and Cys164. A Radical SAM core domain is found at 143 to 375 (RVEGGAAFVS…NEVIEAETAR (233 aa)). One can recognise a TRAM domain in the interval 378 to 441 (QTMVGTVQRC…TFSLRGKVVE (64 aa)).

Belongs to the methylthiotransferase family. MiaB subfamily. In terms of assembly, monomer. It depends on [4Fe-4S] cluster as a cofactor.

Its subcellular location is the cytoplasm. It carries out the reaction N(6)-dimethylallyladenosine(37) in tRNA + (sulfur carrier)-SH + AH2 + 2 S-adenosyl-L-methionine = 2-methylsulfanyl-N(6)-dimethylallyladenosine(37) in tRNA + (sulfur carrier)-H + 5'-deoxyadenosine + L-methionine + A + S-adenosyl-L-homocysteine + 2 H(+). Catalyzes the methylthiolation of N6-(dimethylallyl)adenosine (i(6)A), leading to the formation of 2-methylthio-N6-(dimethylallyl)adenosine (ms(2)i(6)A) at position 37 in tRNAs that read codons beginning with uridine. In Neisseria meningitidis serogroup B (strain ATCC BAA-335 / MC58), this protein is tRNA-2-methylthio-N(6)-dimethylallyladenosine synthase.